A 128-amino-acid polypeptide reads, in one-letter code: MDAVTVYHGKISRETGEKLLLATGLDGSYLLRDSESVPGVYCLCVLYQGYIYTYRVSHTETGSWIADTAPGVHKRFFRKIKNLISAFQKPDQGIVIPLQYPVEKKSSARSTQGATGRREDPDVFLKTP.

The region spanning 6–102 is the SH2 domain; sequence VYHGKISRET…GIVIPLQYPV (97 aa). Residues 67 to 92 are interaction with FYN SH3 domain; it reads DTAPGVHKRFFRKIKNLISAFQKPDQ. N6-acetyllysine is present on Lys89. The disordered stretch occupies residues 103–128; the sequence is EKKSSARSTQGATGRREDPDVFLKTP. Residues 116 to 128 show a composition bias toward basic and acidic residues; it reads GRREDPDVFLKTP.

In terms of assembly, interacts with CD84, CD244, LY9, SLAMF1 and FYN. Interacts with NTRK1, NTRK2 and NTRK3.

Its subcellular location is the cytoplasm. Its function is as follows. Cytoplasmic adapter regulating receptors of the signaling lymphocytic activation molecule (SLAM) family such as SLAMF1, CD244, LY9, CD84, SLAMF6 and SLAMF7. In SLAM signaling seems to cooperate with SH2D1B/EAT-2. Initially it has been proposed that association with SLAMF1 prevents SLAMF1 binding to inhibitory effectors including INPP5D/SHIP1 and PTPN11/SHP-2. However, by simultaneous interactions, recruits FYN which subsequently phosphorylates and activates SLAMF1. Positively regulates CD244/2B4- and CD84-mediated natural killer (NK) cell functions. Can also promote CD48-, SLAMF6 -, LY9-, and SLAMF7-mediated NK cell activation. In the context of NK cell-mediated cytotoxicity enhances conjugate formation with target cells. May also regulate the activity of the neurotrophin receptors NTRK1, NTRK2 and NTRK3. This Sus scrofa (Pig) protein is SH2 domain-containing protein 1A (SH2D1A).